Reading from the N-terminus, the 159-residue chain is Succinate dehydrogenase [ubiquinone] cytochrome b small subunit, mitochondrial (159 aa).

The transit peptide at 1-56 (MAVLLKLGVLCSGQGARALSLRSRAVRPAFVSAFLQDQPTPGWRGTQHIHLSPSHQ) directs the protein to the mitochondrion. At 57-63 (SGSKAAS) the chain is on the mitochondrial matrix side. Residues 64 to 85 (LHWTSERVVSVLLLGLIPAGYL) form a helical membrane-spanning segment. At 86 to 90 (NPCSV) the chain is on the mitochondrial intermembrane side. The chain crosses the membrane as a helical span at residues 91–111 (VDYSLAAALTLHSHWGIGQVV). H102 contacts heme b. Residues 112–120 (TDYVHGDAL) are Mitochondrial matrix-facing. Y114 contacts a ubiquinone. The chain crosses the membrane as a helical span at residues 121–142 (QKATKAGLLAVSALTFAGLCYF). Residues 143-159 (NYHDVGICRAVAMLWKL) lie on the Mitochondrial intermembrane side of the membrane.

The protein belongs to the CybS family. In terms of assembly, component of complex II composed of four subunits: the flavoprotein (FP) SDHA, iron-sulfur protein (IP) SDHB, and a cytochrome b560 composed of SDHC and SDHD.

It is found in the mitochondrion inner membrane. It functions in the pathway carbohydrate metabolism; tricarboxylic acid cycle. Its function is as follows. Membrane-anchoring subunit of succinate dehydrogenase (SDH) that is involved in complex II of the mitochondrial electron transport chain and is responsible for transferring electrons from succinate to ubiquinone (coenzyme Q). SDH also oxidizes malate to the non-canonical enol form of oxaloacetate, enol-oxaloacetate. Enol-oxaloacetate, which is a potent inhibitor of the succinate dehydrogenase activity, is further isomerized into keto-oxaloacetate. In Rattus norvegicus (Rat), this protein is Succinate dehydrogenase [ubiquinone] cytochrome b small subunit, mitochondrial (Sdhd).